The sequence spans 355 residues: tRNA uridine(34) hydroxylase (355 aa).

Residues 146-240 (KDPDALFVDM…YVRTAKKKDL (95 aa)) enclose the Rhodanese domain. C200 (cysteine persulfide intermediate) is an active-site residue.

It belongs to the TrhO family.

The catalysed reaction is uridine(34) in tRNA + AH2 + O2 = 5-hydroxyuridine(34) in tRNA + A + H2O. Functionally, catalyzes oxygen-dependent 5-hydroxyuridine (ho5U) modification at position 34 in tRNAs. The sequence is that of tRNA uridine(34) hydroxylase from Hamiltonella defensa subsp. Acyrthosiphon pisum (strain 5AT).